We begin with the raw amino-acid sequence, 276 residues long: NH(3)-dependent NAD(+) synthetase (276 aa).

43-50 (GISGGVDS) is a binding site for ATP. D49 serves as a coordination point for Mg(2+). Deamido-NAD(+) is bound at residue R146. T166 is a binding site for ATP. E171 provides a ligand contact to Mg(2+). Deamido-NAD(+)-binding residues include K179 and D186. Residues K195 and T217 each coordinate ATP. 266 to 267 (HK) contacts deamido-NAD(+).

It belongs to the NAD synthetase family. In terms of assembly, homodimer.

The enzyme catalyses deamido-NAD(+) + NH4(+) + ATP = AMP + diphosphate + NAD(+) + H(+). It functions in the pathway cofactor biosynthesis; NAD(+) biosynthesis; NAD(+) from deamido-NAD(+) (ammonia route): step 1/1. Its function is as follows. Catalyzes the ATP-dependent amidation of deamido-NAD to form NAD. Uses ammonia as a nitrogen source. This is NH(3)-dependent NAD(+) synthetase from Shewanella piezotolerans (strain WP3 / JCM 13877).